Consider the following 479-residue polypeptide: GTPase Obg (479 aa).

The Obg domain occupies P2–V159. Residues A160–S340 enclose the OBG-type G domain. GTP is bound by residues G166–S173, F191–V195, D212–G215, N292–D295, and S321–V323. The Mg(2+) site is built by S173 and T193. The OCT domain maps to P358–P436. Residues T438–D479 form a disordered region. Basic and acidic residues predominate over residues T451–K467.

This sequence belongs to the TRAFAC class OBG-HflX-like GTPase superfamily. OBG GTPase family. Monomer. Mg(2+) serves as cofactor.

Its subcellular location is the cytoplasm. An essential GTPase which binds GTP, GDP and possibly (p)ppGpp with moderate affinity, with high nucleotide exchange rates and a fairly low GTP hydrolysis rate. Plays a role in control of the cell cycle, stress response, ribosome biogenesis and in those bacteria that undergo differentiation, in morphogenesis control. The protein is GTPase Obg of Mycobacterium ulcerans (strain Agy99).